A 386-amino-acid chain; its full sequence is MKLKLVIDSDSDDYRLFKTTISTVAQLRKTAVLRFTTDRLIVVSTPKTAASGAILSGDQGQLWCTIPRDIFTLYNVASIREQNAIAMECQCDSLVNVLRRYERCNHGPLTIKLQSTPEWNQVHTGIQQGEENKPMGNPICALSCAFTEHLGYEDSGKEVSHVFKVGVRLLYKSQDARIVEPMVNYTKLLMFQLPPVNGEYGSKFTSFVKRLDRYATLNHLMIYGDRNSDRSDEGRLRLLVQELDWKLDVQWRGPLEMIVQDDQPSAVPASEPGLVGNVRHLNAGTSMQIEDSEMDIEATDIGNVSTSRPSTSVSPQEQTSQVFIKAKDWKVCSKLYDSFEEVVLAISHDESCVLHCSLDRGTVDEHSTKSKERGQIIYYMARSKPL.

The protein belongs to the MEC3 family. Component of the checkpoint clamp complex composed of DDC1, MEC3 and RAD17.

It is found in the nucleus. Its function is as follows. Component of the checkpoint clamp complex involved in the surveillance mechanism that allows the DNA repair pathways to act to restore the integrity of the DNA prior to DNA synthesis or separation of the replicated chromosomes. The sequence is that of DNA damage checkpoint control protein MEC3 (MEC3) from Eremothecium gossypii (strain ATCC 10895 / CBS 109.51 / FGSC 9923 / NRRL Y-1056) (Yeast).